A 296-amino-acid polypeptide reads, in one-letter code: Lipoyl synthase (296 aa).

The [4Fe-4S] cluster site is built by Cys-35, Cys-40, Cys-46, Cys-61, Cys-65, Cys-68, and Ser-274. One can recognise a Radical SAM core domain in the interval 47 to 263; it reads WSSKHVTVMI…KEAAYARGFL (217 aa).

This sequence belongs to the radical SAM superfamily. Lipoyl synthase family. The cofactor is [4Fe-4S] cluster.

It localises to the cytoplasm. The enzyme catalyses [[Fe-S] cluster scaffold protein carrying a second [4Fe-4S](2+) cluster] + N(6)-octanoyl-L-lysyl-[protein] + 2 oxidized [2Fe-2S]-[ferredoxin] + 2 S-adenosyl-L-methionine + 4 H(+) = [[Fe-S] cluster scaffold protein] + N(6)-[(R)-dihydrolipoyl]-L-lysyl-[protein] + 4 Fe(3+) + 2 hydrogen sulfide + 2 5'-deoxyadenosine + 2 L-methionine + 2 reduced [2Fe-2S]-[ferredoxin]. Its pathway is protein modification; protein lipoylation via endogenous pathway; protein N(6)-(lipoyl)lysine from octanoyl-[acyl-carrier-protein]: step 2/2. In terms of biological role, catalyzes the radical-mediated insertion of two sulfur atoms into the C-6 and C-8 positions of the octanoyl moiety bound to the lipoyl domains of lipoate-dependent enzymes, thereby converting the octanoylated domains into lipoylated derivatives. The sequence is that of Lipoyl synthase from Neorickettsia sennetsu (strain ATCC VR-367 / Miyayama) (Ehrlichia sennetsu).